Consider the following 366-residue polypeptide: Uroporphyrinogen decarboxylase (366 aa).

Substrate-binding positions include 28-32 (RQAGR), aspartate 78, tyrosine 160, threonine 215, and histidine 333.

Belongs to the uroporphyrinogen decarboxylase family. As to quaternary structure, homodimer.

Its subcellular location is the cytoplasm. It carries out the reaction uroporphyrinogen III + 4 H(+) = coproporphyrinogen III + 4 CO2. Its pathway is porphyrin-containing compound metabolism; protoporphyrin-IX biosynthesis; coproporphyrinogen-III from 5-aminolevulinate: step 4/4. In terms of biological role, catalyzes the decarboxylation of four acetate groups of uroporphyrinogen-III to yield coproporphyrinogen-III. The sequence is that of Uroporphyrinogen decarboxylase from Paraburkholderia phytofirmans (strain DSM 17436 / LMG 22146 / PsJN) (Burkholderia phytofirmans).